We begin with the raw amino-acid sequence, 519 residues long: Maturase K (519 aa).

The protein belongs to the intron maturase 2 family. MatK subfamily.

The protein localises to the plastid. It localises to the chloroplast. Its function is as follows. Usually encoded in the trnK tRNA gene intron. Probably assists in splicing its own and other chloroplast group II introns. This chain is Maturase K, found in Cycas panzhihuaensis (Dukou cycad).